A 1553-amino-acid polypeptide reads, in one-letter code: Sterol 3-beta-glucosyltransferase (1553 aa).

2 stretches are compositionally biased toward polar residues: residues 1–10 (MASSQPTSSG) and 25–36 (LNTETSSSQHRA). Disordered regions lie at residues 1-106 (MASS…NEED) and 189-270 (PASA…GLAP). Residues 90–100 (LPDRLKDNGKE) show a composition bias toward basic and acidic residues. Residues 211–222 (LLQSVPSLSRLS) are compositionally biased toward low complexity. The span at 223–232 (SSHKSKKTKQ) shows a compositional bias: basic residues. 2 GRAM domains span residues 323 to 370 (KKLK…HLPK) and 464 to 495 (SLQR…EEAQ). Residues 374–470 (EIAKSGYLSK…WVKSLQRVIF (97 aa)) enclose the PH domain. Disordered stretches follow at residues 542–569 (SPED…GSPR), 611–662 (FSRR…FDDP), and 805–825 (GKKH…VEDD). A compositionally biased stretch (basic and acidic residues) spans 633 to 650 (LHGDGRRSFSKPRHEPHA). Residues 651–662 (STDSYAQSFDDP) are compositionally biased toward polar residues. Positions 810–819 (DHPAGRRTER) are enriched in basic and acidic residues. In terms of domain architecture, GRAM 3 spans 834 to 900 (ARFQAHFALP…KDIETVDKEK (67 aa)). The UDP-alpha-D-glucose site is built by Ser1020, Arg1021, Asp1023, Ala1328, His1330, His1343, Ser1346, Gly1347, Thr1348, Asp1367, and Gln1368. 2 disordered regions span residues 1446–1504 (KHQS…GSMS) and 1527–1553 (PALG…VKYV). The segment covering 1466–1488 (PEDDQGQAAEEDDIDADDEEEES) has biased composition (acidic residues).

The protein belongs to the glycosyltransferase 28 family.

It localises to the cytoplasm. The protein resides in the preautophagosomal structure membrane. It catalyses the reaction a sterol + UDP-alpha-D-glucose = a sterol 3-beta-D-glucoside + UDP + H(+). The catalysed reaction is ergosterol + UDP-alpha-D-glucose = ergosteryl 3-beta-D-glucoside + UDP + H(+). Sterol glycosyltransferase responsible for the glycosylation of ergosterol to form ergosterol-glucoside. The chain is Sterol 3-beta-glucosyltransferase (apg-12) from Neurospora crassa (strain ATCC 24698 / 74-OR23-1A / CBS 708.71 / DSM 1257 / FGSC 987).